A 290-amino-acid polypeptide reads, in one-letter code: Potassium-transporting ATPase subunit beta (290 aa).

Over 1–36 (MAALQEKKSCSQRMEEFQRYCWNPDTGQMLGRTLSR) the chain is Cytoplasmic. Residues 37 to 57 (WVWISLYYVAFYVVMTGIFAL) traverse the membrane as a helical; Signal-anchor for type II membrane protein segment. Topologically, residues 58-290 (CIYTLMCTLD…KVEFKLTIQQ (233 aa)) are extracellular. Residues Asn99, Asn103, Asn130, Asn146, and Asn161 are each glycosylated (N-linked (GlcNAc...) asparagine). Cys131 and Cys152 are joined by a disulfide. Cys162 and Cys178 form a disulfide bridge. Residues Asn193 and Asn221 are each glycosylated (N-linked (GlcNAc...) asparagine). The segment at 194-290 (STAPRADCTF…KVEFKLTIQQ (97 aa)) is immunoglobulin-like. Cys201 and Cys262 are joined by a disulfide.

This sequence belongs to the X(+)/potassium ATPases subunit beta family. In terms of assembly, the ATPase pump is composed of two subunits: alpha (catalytic) and beta (regulatory). Interacts with alpha subunit ATP12A; this interaction is required for the formation of a functionally active pump and targeting at the plasma membrane. Interacts (via N-terminus) with alpha subunit ATP4A (via the P-domain). N-glycosylation is necessary for assembly and functional expression of the pump at the plasma membrane.

The protein localises to the apical cell membrane. It localises to the cell membrane. The beta subunit of the gastric H(+)/K(+) ATPase pump which transports H(+) ions in exchange for K(+) ions across the apical membrane of parietal cells. Plays a structural and regulatory role in the assembly and membrane targeting of a functionally active pump. Within a transport cycle, the transfer of a H(+) ion across the membrane is coupled to ATP hydrolysis and is associated with a transient phosphorylation of the alpha subunit that shifts the pump conformation from inward-facing (E1) to outward-facing state (E2). Interacts with the phosphorylation domain of the alpha subunit and functions as a ratchet, stabilizing the lumenal-open E2 conformation and preventing the reverse reaction of the transport cycle. The polypeptide is Potassium-transporting ATPase subunit beta (ATP4B) (Canis lupus familiaris (Dog)).